Reading from the N-terminus, the 445-residue chain is Methylenetetrahydrofolate--tRNA-(uracil-5-)-methyltransferase TrmFO (445 aa).

8-13 (GAGLAG) is an FAD binding site.

Belongs to the MnmG family. TrmFO subfamily. It depends on FAD as a cofactor.

The protein resides in the cytoplasm. It catalyses the reaction uridine(54) in tRNA + (6R)-5,10-methylene-5,6,7,8-tetrahydrofolate + NADH + H(+) = 5-methyluridine(54) in tRNA + (6S)-5,6,7,8-tetrahydrofolate + NAD(+). The catalysed reaction is uridine(54) in tRNA + (6R)-5,10-methylene-5,6,7,8-tetrahydrofolate + NADPH + H(+) = 5-methyluridine(54) in tRNA + (6S)-5,6,7,8-tetrahydrofolate + NADP(+). Functionally, catalyzes the folate-dependent formation of 5-methyl-uridine at position 54 (M-5-U54) in all tRNAs. This Rhodobacter capsulatus (strain ATCC BAA-309 / NBRC 16581 / SB1003) protein is Methylenetetrahydrofolate--tRNA-(uracil-5-)-methyltransferase TrmFO.